The chain runs to 163 residues: Putative 4-hydroxy-4-methyl-2-oxoglutarate aldolase (163 aa).

Substrate-binding positions include 76 to 79 (GDMI) and Arg-98. Residue Asp-99 participates in a divalent metal cation binding.

It belongs to the class II aldolase/RraA-like family. In terms of assembly, homotrimer. The cofactor is a divalent metal cation.

It catalyses the reaction 4-hydroxy-4-methyl-2-oxoglutarate = 2 pyruvate. It carries out the reaction oxaloacetate + H(+) = pyruvate + CO2. In terms of biological role, catalyzes the aldol cleavage of 4-hydroxy-4-methyl-2-oxoglutarate (HMG) into 2 molecules of pyruvate. Also contains a secondary oxaloacetate (OAA) decarboxylase activity due to the common pyruvate enolate transition state formed following C-C bond cleavage in the retro-aldol and decarboxylation reactions. This Pseudomonas fluorescens (strain SBW25) protein is Putative 4-hydroxy-4-methyl-2-oxoglutarate aldolase.